The sequence spans 475 residues: Ribulose bisphosphate carboxylase large chain (475 aa).

Positions 1–2 (MS) are excised as a propeptide. Proline 3 is modified (N-acetylproline). At lysine 14 the chain carries N6,N6,N6-trimethyllysine. Positions 123 and 173 each coordinate substrate. The active-site Proton acceptor is the lysine 175. Lysine 177 is a binding site for substrate. Mg(2+) is bound by residues lysine 201, aspartate 203, and glutamate 204. Position 201 is an N6-carboxylysine (lysine 201). The active-site Proton acceptor is histidine 294. 3 residues coordinate substrate: arginine 295, histidine 327, and serine 379.

It belongs to the RuBisCO large chain family. Type I subfamily. As to quaternary structure, heterohexadecamer of 8 large chains and 8 small chains; disulfide-linked. The disulfide link is formed within the large subunit homodimers. Mg(2+) serves as cofactor. In terms of processing, the disulfide bond which can form in the large chain dimeric partners within the hexadecamer appears to be associated with oxidative stress and protein turnover.

Its subcellular location is the plastid. The protein resides in the chloroplast. The catalysed reaction is 2 (2R)-3-phosphoglycerate + 2 H(+) = D-ribulose 1,5-bisphosphate + CO2 + H2O. It catalyses the reaction D-ribulose 1,5-bisphosphate + O2 = 2-phosphoglycolate + (2R)-3-phosphoglycerate + 2 H(+). Functionally, ruBisCO catalyzes two reactions: the carboxylation of D-ribulose 1,5-bisphosphate, the primary event in carbon dioxide fixation, as well as the oxidative fragmentation of the pentose substrate in the photorespiration process. Both reactions occur simultaneously and in competition at the same active site. The chain is Ribulose bisphosphate carboxylase large chain from Amborella trichopoda.